A 155-amino-acid polypeptide reads, in one-letter code: Cell division protein SepF (155 aa).

Residues 16-35 are compositionally biased toward acidic residues; the sequence is TEDEEEDVETVEESEDVEEE. The interval 16 to 44 is disordered; sequence TEDEEEDVETVEESEDVEEEESKKPQFIQ.

This sequence belongs to the SepF family. Homodimer. Interacts with FtsZ.

Its subcellular location is the cytoplasm. Its function is as follows. Cell division protein that is part of the divisome complex and is recruited early to the Z-ring. Probably stimulates Z-ring formation, perhaps through the cross-linking of FtsZ protofilaments. Its function overlaps with FtsA. The chain is Cell division protein SepF from Acetivibrio thermocellus (strain ATCC 27405 / DSM 1237 / JCM 9322 / NBRC 103400 / NCIMB 10682 / NRRL B-4536 / VPI 7372) (Clostridium thermocellum).